Reading from the N-terminus, the 354-residue chain is Holliday junction branch migration complex subunit RuvB (354 aa).

The interval 4 to 190 is large ATPase domain (RuvB-L); the sequence is TDKLAAERII…FGIVARLEFY (187 aa). Residues L29, R30, G71, K74, T75, T76, 137 to 139, R180, Y190, and R227 contribute to the ATP site; that span reads EDY. Residue T75 participates in Mg(2+) binding. The segment at 191–261 is small ATPAse domain (RuvB-S); sequence DADQLARIVR…VADAALAMLD (71 aa). A head domain (RuvB-H) region spans residues 264–354; the sequence is PVGFDLMDRK…RGMWDTPAGK (91 aa). DNA is bound by residues R300, R319, and R324.

This sequence belongs to the RuvB family. In terms of assembly, homohexamer. Forms an RuvA(8)-RuvB(12)-Holliday junction (HJ) complex. HJ DNA is sandwiched between 2 RuvA tetramers; dsDNA enters through RuvA and exits via RuvB. An RuvB hexamer assembles on each DNA strand where it exits the tetramer. Each RuvB hexamer is contacted by two RuvA subunits (via domain III) on 2 adjacent RuvB subunits; this complex drives branch migration. In the full resolvosome a probable DNA-RuvA(4)-RuvB(12)-RuvC(2) complex forms which resolves the HJ.

The protein localises to the cytoplasm. It carries out the reaction ATP + H2O = ADP + phosphate + H(+). Functionally, the RuvA-RuvB-RuvC complex processes Holliday junction (HJ) DNA during genetic recombination and DNA repair, while the RuvA-RuvB complex plays an important role in the rescue of blocked DNA replication forks via replication fork reversal (RFR). RuvA specifically binds to HJ cruciform DNA, conferring on it an open structure. The RuvB hexamer acts as an ATP-dependent pump, pulling dsDNA into and through the RuvAB complex. RuvB forms 2 homohexamers on either side of HJ DNA bound by 1 or 2 RuvA tetramers; 4 subunits per hexamer contact DNA at a time. Coordinated motions by a converter formed by DNA-disengaged RuvB subunits stimulates ATP hydrolysis and nucleotide exchange. Immobilization of the converter enables RuvB to convert the ATP-contained energy into a lever motion, pulling 2 nucleotides of DNA out of the RuvA tetramer per ATP hydrolyzed, thus driving DNA branch migration. The RuvB motors rotate together with the DNA substrate, which together with the progressing nucleotide cycle form the mechanistic basis for DNA recombination by continuous HJ branch migration. Branch migration allows RuvC to scan DNA until it finds its consensus sequence, where it cleaves and resolves cruciform DNA. The protein is Holliday junction branch migration complex subunit RuvB of Burkholderia ambifaria (strain MC40-6).